Reading from the N-terminus, the 562-residue chain is Carboxylesterase 1E (562 aa).

An N-terminal signal peptide occupies residues 1–19 (MCLSALILVSLAAFTAGAG). A glycan (N-linked (GlcNAc...) asparagine) is linked at Asn-80. A disulfide bridge connects residues Cys-88 and Cys-117. The active-site Acyl-ester intermediate is the Ser-222. The cysteines at positions 274 and 285 are disulfide-linked. N-linked (GlcNAc...) asparagine glycosylation is present at Asn-276. Residues Glu-354 and His-467 each act as charge relay system in the active site. A glycan (N-linked (GlcNAc...) asparagine) is linked at Asn-490. Residues 559–562 (HTEL) carry the Prevents secretion from ER motif.

The protein belongs to the type-B carboxylesterase/lipase family.

It localises to the endoplasmic reticulum lumen. The protein resides in the microsome membrane. The catalysed reaction is a carboxylic ester + H2O = an alcohol + a carboxylate + H(+). The enzyme catalyses all-trans-retinyl hexadecanoate + H2O = all-trans-retinol + hexadecanoate + H(+). Functionally, involved in the detoxification of xenobiotics and in the activation of ester and amide prodrugs. Hydrolyzes retinyl esters. The protein is Carboxylesterase 1E of Mus musculus (Mouse).